The primary structure comprises 25 residues: HEDNAGIAVYWGQDAREGDLVTACN.

Homodimer.

It carries out the reaction Random endo-hydrolysis of N-acetyl-beta-D-glucosaminide (1-&gt;4)-beta-linkages in chitin and chitodextrins.. Alpha-amylase inhibitor, active against Z.subfasciatus alpha-amylase (ZSA) but not porcine pancreatic alpha-amylase (PPA). Has chitinase activity. In Phaseolus vulgaris (Kidney bean), this protein is Chitinolytic alpha-amylase inhibitor PvCAI.